Reading from the N-terminus, the 225-residue chain is 2-C-methyl-D-erythritol 4-phosphate cytidylyltransferase (225 aa).

It belongs to the IspD/TarI cytidylyltransferase family. IspD subfamily.

The enzyme catalyses 2-C-methyl-D-erythritol 4-phosphate + CTP + H(+) = 4-CDP-2-C-methyl-D-erythritol + diphosphate. It functions in the pathway isoprenoid biosynthesis; isopentenyl diphosphate biosynthesis via DXP pathway; isopentenyl diphosphate from 1-deoxy-D-xylulose 5-phosphate: step 2/6. In terms of biological role, catalyzes the formation of 4-diphosphocytidyl-2-C-methyl-D-erythritol from CTP and 2-C-methyl-D-erythritol 4-phosphate (MEP). This Chromobacterium violaceum (strain ATCC 12472 / DSM 30191 / JCM 1249 / CCUG 213 / NBRC 12614 / NCIMB 9131 / NCTC 9757 / MK) protein is 2-C-methyl-D-erythritol 4-phosphate cytidylyltransferase.